A 179-amino-acid polypeptide reads, in one-letter code: Large ribosomal subunit protein uL6 (179 aa).

It belongs to the universal ribosomal protein uL6 family. Part of the 50S ribosomal subunit.

Its function is as follows. This protein binds to the 23S rRNA, and is important in its secondary structure. It is located near the subunit interface in the base of the L7/L12 stalk, and near the tRNA binding site of the peptidyltransferase center. The sequence is that of Large ribosomal subunit protein uL6 from Geotalea uraniireducens (strain Rf4) (Geobacter uraniireducens).